The primary structure comprises 286 residues: Energy-coupling factor transporter ATP-binding protein EcfA2 (286 aa).

The ABC transporter domain maps to 3-244; the sequence is IKVENVSFIY…AERLEKIGLS (242 aa). 40-47 is a binding site for ATP; sequence GHTGSGKS.

This sequence belongs to the ABC transporter superfamily. Energy-coupling factor EcfA family. In terms of assembly, forms a stable energy-coupling factor (ECF) transporter complex composed of 2 membrane-embedded substrate-binding proteins (S component), 2 ATP-binding proteins (A component) and 2 transmembrane proteins (T component).

Its subcellular location is the cell membrane. In terms of biological role, ATP-binding (A) component of a common energy-coupling factor (ECF) ABC-transporter complex. Unlike classic ABC transporters this ECF transporter provides the energy necessary to transport a number of different substrates. The sequence is that of Energy-coupling factor transporter ATP-binding protein EcfA2 from Caldanaerobacter subterraneus subsp. tengcongensis (strain DSM 15242 / JCM 11007 / NBRC 100824 / MB4) (Thermoanaerobacter tengcongensis).